The sequence spans 219 residues: EP300-interacting inhibitor of differentiation 2 (219 aa).

The interval 1–71 (MSELPADQGV…PVPEAREGPM (71 aa)) is disordered. The segment covering 20-34 (GDVRQAEVGGRRREP) has biased composition (basic and acidic residues). The residue at position 75 (R75) is an Omega-N-methylarginine. Residues 95 to 115 (AEPAEEEGPEGRPRSRPGNGP) are disordered.

Heterodimer with EID2B. Interacts with the C-terminus of EP300. Interacts with HDAC1 and HDAC2. Interacts with SMAD2, SMAD4 and with the MH2 domain of SMAD3.

Its subcellular location is the nucleus. Its function is as follows. Interacts with EP300 and acts as a repressor of MYOD-dependent transcription and muscle differentiation. Inhibits EP300 histone acetyltransferase activity. Acts as a repressor of TGFB/SMAD transcriptional responses. May act as a repressor of the TGFB/SMAD3-dependent signaling by selectively blocking formation of TGFB-induced SMAD3-SMAD4 complex. This chain is EP300-interacting inhibitor of differentiation 2, found in Bos taurus (Bovine).